The sequence spans 420 residues: Tyrosine--tRNA ligase (420 aa).

Residue tyrosine 38 coordinates L-tyrosine. Residues 43-52 (PTGDSLHIGH) carry the 'HIGH' region motif. Tyrosine 169 and glutamine 173 together coordinate L-tyrosine. The 'KMSKS' region signature appears at 231 to 235 (KFGKS). Lysine 234 contacts ATP. One can recognise an S4 RNA-binding domain in the interval 353–419 (KNIVEFLVET…GKRKYTLVKI (67 aa)).

It belongs to the class-I aminoacyl-tRNA synthetase family. TyrS type 1 subfamily. As to quaternary structure, homodimer.

It localises to the cytoplasm. It carries out the reaction tRNA(Tyr) + L-tyrosine + ATP = L-tyrosyl-tRNA(Tyr) + AMP + diphosphate + H(+). In terms of biological role, catalyzes the attachment of tyrosine to tRNA(Tyr) in a two-step reaction: tyrosine is first activated by ATP to form Tyr-AMP and then transferred to the acceptor end of tRNA(Tyr). The chain is Tyrosine--tRNA ligase from Lactobacillus johnsonii (strain CNCM I-12250 / La1 / NCC 533).